Reading from the N-terminus, the 879-residue chain is Alanine--tRNA ligase (879 aa).

Residues H566, H570, C668, and H672 each contribute to the Zn(2+) site.

The protein belongs to the class-II aminoacyl-tRNA synthetase family. Zn(2+) serves as cofactor.

The protein resides in the cytoplasm. It catalyses the reaction tRNA(Ala) + L-alanine + ATP = L-alanyl-tRNA(Ala) + AMP + diphosphate. Functionally, catalyzes the attachment of alanine to tRNA(Ala) in a two-step reaction: alanine is first activated by ATP to form Ala-AMP and then transferred to the acceptor end of tRNA(Ala). Also edits incorrectly charged Ser-tRNA(Ala) and Gly-tRNA(Ala) via its editing domain. The polypeptide is Alanine--tRNA ligase (Clostridium beijerinckii (strain ATCC 51743 / NCIMB 8052) (Clostridium acetobutylicum)).